The sequence spans 231 residues: Large ribosomal subunit protein uL1 (231 aa).

The protein belongs to the universal ribosomal protein uL1 family. Part of the 50S ribosomal subunit.

In terms of biological role, binds directly to 23S rRNA. The L1 stalk is quite mobile in the ribosome, and is involved in E site tRNA release. Its function is as follows. Protein L1 is also a translational repressor protein, it controls the translation of the L11 operon by binding to its mRNA. This Polaromonas naphthalenivorans (strain CJ2) protein is Large ribosomal subunit protein uL1.